A 94-amino-acid polypeptide reads, in one-letter code: Small ribosomal subunit protein uS19 (94 aa).

Belongs to the universal ribosomal protein uS19 family.

Protein S19 forms a complex with S13 that binds strongly to the 16S ribosomal RNA. The sequence is that of Small ribosomal subunit protein uS19 from Desulforamulus reducens (strain ATCC BAA-1160 / DSM 100696 / MI-1) (Desulfotomaculum reducens).